The primary structure comprises 320 residues: Annexin A5 (320 aa).

Residue alanine 2 is modified to N-acetylalanine. 4 Annexin repeats span residues 15 to 86, 87 to 158, 170 to 242, and 246 to 317; these read FDER…ALMK, PSRL…VLLQ, AQVE…AVVK, and SIPA…LLCG. Lysine 29 is covalently cross-linked (Glycyl lysine isopeptide (Lys-Gly) (interchain with G-Cter in SUMO1); alternate). Lysine 29 is covalently cross-linked (Glycyl lysine isopeptide (Lys-Gly) (interchain with G-Cter in SUMO2); alternate). Serine 37 carries the phosphoserine modification. Residues lysine 70, lysine 76, lysine 79, lysine 97, and lysine 101 each carry the N6-acetyllysine modification. Lysine 290 carries the N6-succinyllysine modification. The [IL]-x-C-x-x-[DE] motif motif lies at 314–319; it reads LLCGED.

The protein belongs to the annexin family. In terms of assembly, monomer. Binds ATRX and EIF5B. Interacts with hepatitis B virus (HBV). Post-translationally, S-nitrosylation is induced by interferon-gamma and oxidatively-modified low-densitity lipoprotein (LDL(ox)) possibly implicating the iNOS-S100A8/9 transnitrosylase complex.

Functionally, this protein is an anticoagulant protein that acts as an indirect inhibitor of the thromboplastin-specific complex, which is involved in the blood coagulation cascade. In Homo sapiens (Human), this protein is Annexin A5 (ANXA5).